The following is a 469-amino-acid chain: MVISESMDILFRIRGGLDLAFQLATPNEIFLKKALKHVLSDLSTKLSSNALVFRICHSSVYIWPSSDINTIPGELTDASACKNILRFIQFEPEEDIKRKFMRKKDKKLSDMHQIVNIDLMLEMSTSLAAVTPIIERESGGHHYVNMTLPVDAVISVAPEETWGKVRKLLVDAIHNQLTDMEKCILKYMKGTSIVVPEPLHFLLPGKKNLVTISYPSGIPDGQLQAYRKELHDLFNLPHDRPYFKRSNAYHFPDEPYKDGYIRNPHTYLNPPNMETGMIYVVQGIYGYHHYMQDRIDDNGWGCAYRSLQTICSWFKHQGYTERSIPTHREIQQALVDAGDKPATFVGSRQWIGSIEVQLVLNQLIGITSKILFVSQGSEIASQGRELANHFQSEGTPVMIGGGVLAHTILGVAWNEITGQIKFLILDPHYTGAEDLQVILEKGWCGWKGPDFWNKDAYYNLCLPQRPNMI.

Residue M1 is modified to N-acetylmethionine. Residues C302, D426, and H428 contribute to the active site.

Belongs to the peptidase C78 family. In terms of tissue distribution, expressed in brain.

Its subcellular location is the endoplasmic reticulum. The protein resides in the cytoplasm. It localises to the nucleus. In terms of biological role, thiol-dependent isopeptidase that specifically cleaves UFM1, a ubiquitin-like modifier protein, from conjugated proteins, such as CD274/PD-L1, CYB5R3, DDRGK1, MRE11, RPL26/uL24, TRIP4 and RPL26/uL24. While it is also able to mediate the processing of UFM1 precursors, a prerequisite for conjugation reactions, UFSP2 mainly acts as a protein deUFMylase that mediates deconjugation of UFM1 from target proteins. Mediates deUFMylation of RPL26/uL24, a critical step to release the UFM1 ribosome E3 ligase (UREL) complex during the recycling of 60S ribosome subunits from the endoplasmic reticulum. Catalyzes deUFMylation of TRIP4, regulating intracellular nuclear receptors transactivation and thereby regulate cell proliferation and differentiation. In Homo sapiens (Human), this protein is Ufm1-specific protease 2.